A 432-amino-acid chain; its full sequence is MQVSVETTQGLGRRVTITIAADSIETAVKSELVNVAKKVRIDGFRKGKVPMNIVAQRYGASVRQDVLGDLMSRNFIDAIIKEKINPAGAPTYVPGEYKLGEDFTYSVEFEVYPEVELQGLEAIEVEKPIVEVTDADVDGMLDTLRKQQATWKEKDGAVEAEDRVTIDFTGSVDGEEFEGGKASDFVLAMGQGRMIPGFEDGIKGHKAGEEFTIDVTFPEEYHAENLKGKAAKFAINLKKVEERELPELTEEFIKRFGVEDGSVEGLRAEVRKNMERELKSAIRNRVKSQAIEGLVKANDIDVPAALIDSEIDVLRRQAAQRFGGNEKQALELPRELFEEQAKRRVVVGLLLGEVIRTNELKADEERVKGLIEEMASAYEDPKEVIEFYSKNKELMDNMRNVALEEQAVEAVLAKAKVTEKETTFNELMNQQA.

Residues 161–246 (EDRVTIDFTG…LKKVEERELP (86 aa)) enclose the PPIase FKBP-type domain.

Belongs to the FKBP-type PPIase family. Tig subfamily. Homodimer and monomer. In vivo most of the ribosomes are in complex with monomeric TF. Uncomplexed TF, however, is in a monomer-dimer equilibrium with approximately two thirds of TF existing in a dimeric state.

Its subcellular location is the cytoplasm. The enzyme catalyses [protein]-peptidylproline (omega=180) = [protein]-peptidylproline (omega=0). Involved in protein export. Acts as a chaperone by maintaining the newly synthesized protein in an open conformation. Functions as a peptidyl-prolyl cis-trans isomerase. This is Trigger factor from Escherichia coli O6:K15:H31 (strain 536 / UPEC).